Here is a 972-residue protein sequence, read N- to C-terminus: 116 kDa U5 small nuclear ribonucleoprotein component (972 aa).

At methionine 1 the chain carries N-acetylmethionine. The disordered stretch occupies residues 1–54 (MDTDLYDEFGNYIGPELDSDEDDDELGRETKDLDEMDDDDDDDDIGDHDDDHPG). 2 stretches are compositionally biased toward acidic residues: residues 17–26 (LDSDEDDDEL) and 34–48 (DEMD…IGDH). The residue at position 19 (serine 19) is a Phosphoserine. A Glycyl lysine isopeptide (Lys-Gly) (interchain with G-Cter in SUMO1); alternate cross-link involves residue lysine 64. Residue lysine 64 forms a Glycyl lysine isopeptide (Lys-Gly) (interchain with G-Cter in SUMO2); alternate linkage. Threonine 86 is modified (phosphothreonine). Positions 127-409 (ELIRNVTLCG…GIHLTKEELK (283 aa)) constitute a tr-type G domain. Residues 136–143 (GHLHHGKT), 204–208 (DTPGH), and 258–261 (NKID) each bind GTP.

Belongs to the TRAFAC class translation factor GTPase superfamily. Classic translation factor GTPase family. EF-G/EF-2 subfamily. Component of the U5 snRNP and the U4/U6-U5 tri-snRNP complex, a building block of the spliceosome. The U4/U6-U5 tri-snRNP complex is composed of the U4, U6 and U5 snRNAs and at least PRPF3, PRPF4, PRPF6, PRPF8, PRPF31, SNRNP200, TXNL4A, SNRNP40, DDX23, CD2BP2, PPIH, SNU13, EFTUD2, SART1 and USP39. Component of the pre-catalytic, catalytic and post-catalytic spliceosome complexes. Component of the minor spliceosome, which splices U12-type introns. Within this complex, interacts with CRIPT. Interacts with ERBB4 and PRPF8. Interacts with PIH1D1. Interacts with RPAP3 and URI1 in a ZNHIT2-dependent manner. Interacts with NRDE2. Interacts with FAM50A. Interacts with UBL5.

The protein localises to the nucleus. In terms of biological role, required for pre-mRNA splicing as component of the spliceosome, including pre-catalytic, catalytic and post-catalytic spliceosomal complexes. Component of the U5 snRNP and the U4/U6-U5 tri-snRNP complex, a building block of the spliceosome. As a component of the minor spliceosome, involved in the splicing of U12-type introns in pre-mRNAs. This is 116 kDa U5 small nuclear ribonucleoprotein component (EFTUD2) from Pongo abelii (Sumatran orangutan).